A 140-amino-acid polypeptide reads, in one-letter code: ATP synthase epsilon chain (140 aa).

It belongs to the ATPase epsilon chain family. As to quaternary structure, F-type ATPases have 2 components, CF(1) - the catalytic core - and CF(0) - the membrane proton channel. CF(1) has five subunits: alpha(3), beta(3), gamma(1), delta(1), epsilon(1). CF(0) has three main subunits: a, b and c.

Its subcellular location is the cell inner membrane. In terms of biological role, produces ATP from ADP in the presence of a proton gradient across the membrane. In Yersinia pseudotuberculosis serotype O:1b (strain IP 31758), this protein is ATP synthase epsilon chain.